The sequence spans 276 residues: Undecaprenyl-diphosphatase (276 aa).

6 helical membrane-spanning segments follow: residues 43 to 63, 85 to 105, 109 to 129, 183 to 203, 214 to 234, and 249 to 269; these read RAMAFNIIIQLAAILAVVWEF, ANLLLAFMPAVVLGVLFADLI, LFNPITVATALVIGGVIMLWA, AATEFSFFLAMPTMVGAAVYS, SDLPVFAIGFVTSFIFAMIAV, and FAWYRIAFGLLILATWQFGWV.

The protein belongs to the UppP family.

The protein resides in the cell inner membrane. It carries out the reaction di-trans,octa-cis-undecaprenyl diphosphate + H2O = di-trans,octa-cis-undecaprenyl phosphate + phosphate + H(+). Functionally, catalyzes the dephosphorylation of undecaprenyl diphosphate (UPP). Confers resistance to bacitracin. This is Undecaprenyl-diphosphatase from Pseudomonas putida (strain W619).